A 229-amino-acid chain; its full sequence is C-&gt;U-editing enzyme APOBEC-1 (229 aa).

Residues 10–134 (VDPTLRRRIE…PRNRQGLRDL (125 aa)) form the CMP/dCMP-type deaminase domain. His-61 contacts Zn(2+). Residue Glu-63 is the Proton donor of the active site. Zn(2+) is bound by residues Cys-93 and Cys-96.

This sequence belongs to the cytidine and deoxycytidylate deaminase family. Homodimer. Interacts with A1CF; form an mRNA editing complex. Interacts with RBM47; form an mRNA editing complex. Found in a complex with CELF2/CUGBP2 and A1CF. Interacts with HNRPAB. Interacts with SYNCRIP. It depends on Zn(2+) as a cofactor. In terms of tissue distribution, expressed in the liver as well as small intestine.

It localises to the cytoplasm. The protein resides in the nucleus. The enzyme catalyses a cytidine in mRNA + H2O + H(+) = a uridine in mRNA + NH4(+). It carries out the reaction cytidine(6666) in apoB mRNA + H2O + H(+) = uridine(6666) in apoB mRNA + NH4(+). Its function is as follows. Cytidine deaminase catalyzing the cytidine to uridine postranscriptional editing of a variety of mRNAs. Form complexes with cofactors that confer differential editing activity and selectivity. Responsible for the postranscriptional editing of a CAA codon for Gln to a UAA codon for stop in the apolipoprotein B mRNA. Also involved in CGA (Arg) to UGA (Stop) editing in the NF1 mRNA. May also play a role in the epigenetic regulation of gene expression by participating in DNA demethylation. This chain is C-&gt;U-editing enzyme APOBEC-1, found in Rattus norvegicus (Rat).